We begin with the raw amino-acid sequence, 217 residues long: Probable coenzyme A transferase subunit beta (217 aa).

E50 is an active-site residue.

It belongs to the 3-oxoacid CoA-transferase subunit B family. In terms of assembly, heterodimer of a subunit alpha and a subunit beta.

The polypeptide is Probable coenzyme A transferase subunit beta (yodR) (Bacillus subtilis (strain 168)).